Reading from the N-terminus, the 587-residue chain is Arginine--tRNA ligase (587 aa).

The 'HIGH' region signature appears at 126-136 (ANPTGPLHVGH).

Belongs to the class-I aminoacyl-tRNA synthetase family. As to quaternary structure, monomer.

It is found in the cytoplasm. The enzyme catalyses tRNA(Arg) + L-arginine + ATP = L-arginyl-tRNA(Arg) + AMP + diphosphate. This Aromatoleum aromaticum (strain DSM 19018 / LMG 30748 / EbN1) (Azoarcus sp. (strain EbN1)) protein is Arginine--tRNA ligase.